A 404-amino-acid chain; its full sequence is Probable tRNA sulfurtransferase (404 aa).

A THUMP domain is found at 60–165 (TAVAESLKQV…EEAAYLSYET (106 aa)). ATP contacts are provided by residues 183–184 (ML), 208–209 (HF), R265, G287, and Q296.

The protein belongs to the ThiI family.

The protein localises to the cytoplasm. It catalyses the reaction [ThiI sulfur-carrier protein]-S-sulfanyl-L-cysteine + a uridine in tRNA + 2 reduced [2Fe-2S]-[ferredoxin] + ATP + H(+) = [ThiI sulfur-carrier protein]-L-cysteine + a 4-thiouridine in tRNA + 2 oxidized [2Fe-2S]-[ferredoxin] + AMP + diphosphate. The enzyme catalyses [ThiS sulfur-carrier protein]-C-terminal Gly-Gly-AMP + S-sulfanyl-L-cysteinyl-[cysteine desulfurase] + AH2 = [ThiS sulfur-carrier protein]-C-terminal-Gly-aminoethanethioate + L-cysteinyl-[cysteine desulfurase] + A + AMP + 2 H(+). The protein operates within cofactor biosynthesis; thiamine diphosphate biosynthesis. In terms of biological role, catalyzes the ATP-dependent transfer of a sulfur to tRNA to produce 4-thiouridine in position 8 of tRNAs, which functions as a near-UV photosensor. Also catalyzes the transfer of sulfur to the sulfur carrier protein ThiS, forming ThiS-thiocarboxylate. This is a step in the synthesis of thiazole, in the thiamine biosynthesis pathway. The sulfur is donated as persulfide by IscS. The protein is Probable tRNA sulfurtransferase of Streptococcus pneumoniae (strain 70585).